The primary structure comprises 474 residues: bZIP transcription factor hapX (474 aa).

The span at 1-10 (MSTSAGTPTS) shows a compositional bias: polar residues. The segment at 1 to 82 (MSTSAGTPTS…RKAQNRAAQR (82 aa)) is disordered. The 42-residue stretch at 67 to 108 (DTPPTKRKAQNRAAQRAFRERRAARVGELEEQIKKIEEENER) folds into the bZIP domain. Residues 72 to 91 (KRKAQNRAAQRAFRERRAAR) are basic motif. A leucine-zipper region spans residues 95–102 (LEEQIKKI). 3 disordered regions span residues 201 to 242 (QMQT…TDFT), 282 to 317 (EDQP…GDVL), and 429 to 449 (TLPN…LTNR). The segment covering 287–307 (DRSNQPSQLTKLPPIQNISQF) has biased composition (polar residues).

It belongs to the bZIP family. YAP subfamily.

It is found in the nucleus. Iron regulator crucial for the adaptation to iron starvation and iron excess, but is dispensable for virulence. SreA represses the expression of hapX and the siderophore system during iron sufficient conditions by an iron-sensing mechanism, while hapX represses sreA and activates the siderophore system during iron-limiting conditions, resulting in efficient iron uptake and inhibition of iron-consuming pathways. HapX targets include genes encoding a number of key iron-regulated factors such as the vacuolar iron importer cccA, as well as hemA, cycA and lysF involved in heme biosynthesis, respiration and lysine biosynthesis, respectively. Activation of the vacuolar iron importer cccA during high iron conditions is essential for iron detoxification. In Arthroderma benhamiae (strain ATCC MYA-4681 / CBS 112371) (Trichophyton mentagrophytes), this protein is bZIP transcription factor hapX.